Consider the following 808-residue polypeptide: MNVHGCPRIAACRCTDTHPRGRPAFAYRWFVPKTTRAQPGRLSSRFWRLLGASTEKNRSRSLADVTASAEYDKEAADLSDEKLRKAAGLLNLDDLAESADIPQFLAIAREAAERRTGLRPFDVQLLGALRMLAGDVIEMATGEGKTLAGAIAAAGYALAGRHVHVVTINDYLARRDAEWMGPLLDAMGLTVGWITADSTPDERRTAYDRDVTYASVNEIGFDVLRDQLVTDVNDLVSPNPDVALIDEADSVLVDEALVPLVLAGTTHRETPRLEIIRLVAELVGDKDADEYFATDSDNRNVHLTEHGARKVEKALGGIDLYSEEHVGTTLTEVNVALHAHVLLQRDVHYIVRDDAVHLINASRGRIAQLQRWPDGLQAAVEAKEGIETTETGEVLDTITVQALINRYATVCGMTGTALAAGEQLRQFYQLGVSPIPPNKPNIREDEADRVYITTAAKNDGIVEHITEVHQRGQPVLVGTRDVAESEELHERLVRRGVPAVVLNAKNDAEEARVIAEAGKYGAVTVSTQMAGRGTDIRLGGSDEADHDRVAELGGLHVVGTGRHHTERLDNQLRGRAGRQGDPGSSVFFSSWEDDVVAANLDHNKLPMATDENGRIVSPRTGSLLDHAQRVAEGRLLDVHANTWRYNQLIAQQRAIIVERRNTLLRTVTAREELAELAPKRYEELSDKVSEERLETICRQIMLYHLDRGWADHLAYLADIRESIHLRALGRQNPLDEFHRMAVDAFASLAADAIEAAQQTFETANVLDHEPGLDLSKLARPTSTWTYMVNDNPLSDDTLSALSLPGVFR.

Residues glutamine 124, 142 to 146 (GEGKT), and aspartate 535 each bind ATP.

The protein belongs to the SecA family. As to quaternary structure, monomer and homodimer. Part of the essential Sec protein translocation apparatus which comprises SecA, SecYEG and auxiliary proteins SecDF. Other proteins may also be involved.

It localises to the cell membrane. The protein localises to the cytoplasm. The enzyme catalyses ATP + H2O + cellular proteinSide 1 = ADP + phosphate + cellular proteinSide 2.. Functionally, part of the Sec protein translocase complex. Interacts with the SecYEG preprotein conducting channel. Has a central role in coupling the hydrolysis of ATP to the transfer of proteins into and across the cell membrane, serving as an ATP-driven molecular motor driving the stepwise translocation of polypeptide chains across the membrane. The sequence is that of Protein translocase subunit SecA 2 from Mycobacterium bovis (strain BCG / Pasteur 1173P2).